Reading from the N-terminus, the 479-residue chain is PTS system glucose-specific EIICB component (479 aa).

The region spanning 1-388 (MFKNAFSNLQ…FNLKTPGREK (388 aa)) is the PTS EIIC type-1 domain. The next 9 helical transmembrane spans lie at 15-35 (SLML…IGSA), 51-71 (AGSS…ALGF), 80-100 (LAAV…IPIF), 112-132 (YLLD…AYIF), 152-172 (FVPI…SIIW), 252-272 (GGFI…WHCA), 280-300 (IGGI…TEPI), 305-325 (ILVA…AFPI), and 356-376 (LFPI…YFMI). The 81-residue stretch at 399–479 (KETALLVISI…IDNYMSNTNQ (81 aa)) folds into the PTS EIIB type-1 domain. Cysteine 421 serves as the catalytic Phosphocysteine intermediate; for EIIB activity. The residue at position 421 (cysteine 421) is a Phosphocysteine.

It localises to the cell inner membrane. The enzyme catalyses N(pros)-phospho-L-histidyl-[protein] + D-glucose(out) = D-glucose 6-phosphate(in) + L-histidyl-[protein]. In terms of biological role, the phosphoenolpyruvate-dependent sugar phosphotransferase system (sugar PTS), a major carbohydrate active transport system, catalyzes the phosphorylation of incoming sugar substrates concomitantly with their translocation across the cell membrane. The enzyme II complex composed of PtsG and Crr is involved in glucose transport. The protein is PTS system glucose-specific EIICB component (ptsG) of Buchnera aphidicola subsp. Baizongia pistaciae (strain Bp).